The chain runs to 274 residues: Aliphatic sulfonates import ATP-binding protein SsuB 2 (274 aa).

In terms of domain architecture, ABC transporter spans 21–235 (VQLRNVVRQF…DSGQAGFQLI (215 aa)). 53-60 (GASGSGKT) contributes to the ATP binding site.

The protein belongs to the ABC transporter superfamily. Aliphatic sulfonates importer (TC 3.A.1.17.2) family. In terms of assembly, the complex is composed of two ATP-binding proteins (SsuB), two transmembrane proteins (SsuC) and a solute-binding protein (SsuA).

It localises to the cell inner membrane. The catalysed reaction is ATP + H2O + aliphatic sulfonate-[sulfonate-binding protein]Side 1 = ADP + phosphate + aliphatic sulfonateSide 2 + [sulfonate-binding protein]Side 1.. Part of the ABC transporter complex SsuABC involved in aliphatic sulfonates import. Responsible for energy coupling to the transport system. The sequence is that of Aliphatic sulfonates import ATP-binding protein SsuB 2 from Pseudomonas syringae pv. syringae (strain B728a).